Reading from the N-terminus, the 82-residue chain is DNA-directed RNA polymerase subunit Rpo5 (82 aa).

It belongs to the archaeal Rpo5/eukaryotic RPB5 RNA polymerase subunit family. As to quaternary structure, part of the RNA polymerase complex.

It localises to the cytoplasm. It carries out the reaction RNA(n) + a ribonucleoside 5'-triphosphate = RNA(n+1) + diphosphate. Its function is as follows. DNA-dependent RNA polymerase (RNAP) catalyzes the transcription of DNA into RNA using the four ribonucleoside triphosphates as substrates. In Pyrococcus horikoshii (strain ATCC 700860 / DSM 12428 / JCM 9974 / NBRC 100139 / OT-3), this protein is DNA-directed RNA polymerase subunit Rpo5.